The sequence spans 501 residues: Bifunctional purine biosynthesis protein PurH (501 aa).

The MGS-like domain maps to 1 to 144 (MKKRALISVF…KNFKDVVVLS (144 aa)).

It belongs to the PurH family.

The enzyme catalyses (6R)-10-formyltetrahydrofolate + 5-amino-1-(5-phospho-beta-D-ribosyl)imidazole-4-carboxamide = 5-formamido-1-(5-phospho-D-ribosyl)imidazole-4-carboxamide + (6S)-5,6,7,8-tetrahydrofolate. It carries out the reaction IMP + H2O = 5-formamido-1-(5-phospho-D-ribosyl)imidazole-4-carboxamide. It participates in purine metabolism; IMP biosynthesis via de novo pathway; 5-formamido-1-(5-phospho-D-ribosyl)imidazole-4-carboxamide from 5-amino-1-(5-phospho-D-ribosyl)imidazole-4-carboxamide (10-formyl THF route): step 1/1. Its pathway is purine metabolism; IMP biosynthesis via de novo pathway; IMP from 5-formamido-1-(5-phospho-D-ribosyl)imidazole-4-carboxamide: step 1/1. The polypeptide is Bifunctional purine biosynthesis protein PurH (Clostridium perfringens (strain SM101 / Type A)).